Here is a 223-residue protein sequence, read N- to C-terminus: 7-cyano-7-deazaguanine synthase (223 aa).

Residue phenylalanine 15–leucine 25 coordinates ATP. Residues cysteine 191, cysteine 200, cysteine 203, and cysteine 206 each coordinate Zn(2+).

Belongs to the QueC family. Homodimer. Requires Zn(2+) as cofactor.

The catalysed reaction is 7-carboxy-7-deazaguanine + NH4(+) + ATP = 7-cyano-7-deazaguanine + ADP + phosphate + H2O + H(+). It participates in purine metabolism; 7-cyano-7-deazaguanine biosynthesis. Catalyzes the ATP-dependent conversion of 7-carboxy-7-deazaguanine (CDG) to 7-cyano-7-deazaguanine (preQ(0)). The polypeptide is 7-cyano-7-deazaguanine synthase (Staphylococcus saprophyticus subsp. saprophyticus (strain ATCC 15305 / DSM 20229 / NCIMB 8711 / NCTC 7292 / S-41)).